The primary structure comprises 539 residues: MSILSMVEDRPTPKEVYNWRIYLLAAVASFTSCMIGYDSAFIGTTISLDSFKNEFHWDSMSTAKQNLVSANIVSCYQAGAFFGAFFAYPIGHFWGRKWGLMLSALVFTLGAGLMLGANGDRGLGLIYGGRVLAGLGVGAGSNFTPIYISELAPPAIRGRLVGVYELGWQVGGLVGFWINYGVEQTMAPSHKQWLIPFAVQLIPAGLLIIGILFVKESPRWLFLRGRREEAIKNLCWIRQIPADHIYMIEEIGAIDQTLEHQRSTIGLGFWRPLKEAWTNKRILYRLFLGSMLFFWQNGSGINAINYYSPTVFKSIGLKGNSSSLLTTGIFGVVKTVVTIVWLLYLIDHVGRRLLLLIGAAGGSICMWIVGAYIKVVDPTHNQSDHLNGGGVAAIFFFYLWTAFYTPSWNGTPWVINSEMFDPNIRSLAQACAAGSNWLWNFLISRFTPQMFAKMDYGVYFFFASLMLLSIPFVFFLVPETKGIPLENMDPLFQTQPVWRAHAKVLAQIHEDEARFRRDLEESGYTKGNVEQVEDTDRKE.

The Cytoplasmic portion of the chain corresponds to M1–Y22. The chain crosses the membrane as a helical span at residues L23–G43. The Extracellular portion of the chain corresponds to T44 to S74. The helical transmembrane segment at C75–G95 threads the bilayer. At R96–K97 the chain is on the cytoplasmic side. A helical transmembrane segment spans residues W98 to N118. The Extracellular portion of the chain corresponds to G119–R130. A helical membrane pass occupies residues V131–L151. Topologically, residues A152–R159 are cytoplasmic. Residues L160–Y180 form a helical membrane-spanning segment. At G181–W193 the chain is on the extracellular side. The chain crosses the membrane as a helical span at residues L194–V214. Over K215–R285 the chain is Cytoplasmic. Residues L286–Y306 form a helical membrane-spanning segment. Over Y307–L325 the chain is Extracellular. Residues T326 to I346 traverse the membrane as a helical segment. At D347 to R352 the chain is on the cytoplasmic side. Residues L353–I373 form a helical membrane-spanning segment. Residues K374–N387 are Extracellular-facing. Residues G388 to W408 form a helical membrane-spanning segment. The Cytoplasmic portion of the chain corresponds to N409–Y456. A helical transmembrane segment spans residues G457–V477. The Extracellular portion of the chain corresponds to P478 to E539.

This sequence belongs to the major facilitator superfamily. Sugar transporter (TC 2.A.1.1) family. Interacts with creB. In terms of processing, ubiquitinated. Deubiquitinated by creB, probably to control its activity or amount.

Its subcellular location is the cell membrane. Its function is as follows. Integral membrane transporter that imports quinic acid to be catabolized as a carbon source. This is Probable quinate permease (qutD) from Aspergillus niger (strain ATCC MYA-4892 / CBS 513.88 / FGSC A1513).